A 192-amino-acid chain; its full sequence is Ion-translocating oxidoreductase complex subunit B (192 aa).

The interval 1–26 (MNAIWIAVVAVSLLGLAFGAILGYAS) is hydrophobic. In terms of domain architecture, 4Fe-4S spans 32–91 (EDDPVVEKIDEILPQSQCGQCGYPGCRPYAEAIGSQGEKINRCAPGGEAVMLKIATLLNV). [4Fe-4S] cluster contacts are provided by Cys49, Cys52, Cys57, Cys74, Cys117, Cys120, Cys123, Cys127, Cys147, Cys150, Cys153, and Cys157. 4Fe-4S ferredoxin-type domains are found at residues 108 to 137 (MLAV…GATR) and 138 to 167 (AMHT…LRPV).

Belongs to the 4Fe4S bacterial-type ferredoxin family. RnfB subfamily. In terms of assembly, the complex is composed of six subunits: RnfA, RnfB, RnfC, RnfD, RnfE and RnfG. Requires [4Fe-4S] cluster as cofactor.

The protein resides in the cell inner membrane. Functionally, part of a membrane-bound complex that couples electron transfer with translocation of ions across the membrane. The protein is Ion-translocating oxidoreductase complex subunit B of Citrobacter koseri (strain ATCC BAA-895 / CDC 4225-83 / SGSC4696).